Here is a 1058-residue protein sequence, read N- to C-terminus: Carbamoyl phosphate synthase large chain (1058 aa).

The carboxyphosphate synthetic domain stretch occupies residues 1 to 401 (MSKRKDIQKI…SLLKACRSLE (401 aa)). The ATP site is built by arginine 129, arginine 169, glycine 175, glycine 176, arginine 208, isoleucine 210, glutamate 215, glycine 241, isoleucine 242, histidine 243, glutamine 284, and glutamate 298. One can recognise an ATP-grasp 1 domain in the interval 133 to 327 (KQLMQELDQP…IAKLAAKIAV (195 aa)). The Mg(2+) site is built by glutamine 284, glutamate 298, and asparagine 300. Glutamine 284, glutamate 298, and asparagine 300 together coordinate Mn(2+). The tract at residues 402–546 (IGVCHNEMTS…YSTYELENES (145 aa)) is oligomerization domain. Positions 547–929 (VQSNKESILV…ALYKAFEANN (383 aa)) are carbamoyl phosphate synthetic domain. The 191-residue stretch at 671 to 861 (EKALKELGIP…MAQIATKLIL (191 aa)) folds into the ATP-grasp 2 domain. ATP contacts are provided by arginine 707, serine 746, isoleucine 748, glutamate 752, glycine 777, valine 778, histidine 779, serine 780, glutamine 820, and glutamate 832. Glutamine 820, glutamate 832, and asparagine 834 together coordinate Mg(2+). Positions 820, 832, and 834 each coordinate Mn(2+). An MGS-like domain is found at 930-1058 (SHLSEFGQIV…ESRCFNIEAI (129 aa)). Residues 930-1058 (SHLSEFGQIV…ESRCFNIEAI (129 aa)) form an allosteric domain region.

Belongs to the CarB family. In terms of assembly, composed of two chains; the small (or glutamine) chain promotes the hydrolysis of glutamine to ammonia, which is used by the large (or ammonia) chain to synthesize carbamoyl phosphate. Tetramer of heterodimers (alpha,beta)4. Mg(2+) serves as cofactor. It depends on Mn(2+) as a cofactor.

It carries out the reaction hydrogencarbonate + L-glutamine + 2 ATP + H2O = carbamoyl phosphate + L-glutamate + 2 ADP + phosphate + 2 H(+). It catalyses the reaction hydrogencarbonate + NH4(+) + 2 ATP = carbamoyl phosphate + 2 ADP + phosphate + 2 H(+). It functions in the pathway amino-acid biosynthesis; L-arginine biosynthesis; carbamoyl phosphate from bicarbonate: step 1/1. It participates in pyrimidine metabolism; UMP biosynthesis via de novo pathway; (S)-dihydroorotate from bicarbonate: step 1/3. Its function is as follows. Large subunit of the glutamine-dependent carbamoyl phosphate synthetase (CPSase). CPSase catalyzes the formation of carbamoyl phosphate from the ammonia moiety of glutamine, carbonate, and phosphate donated by ATP, constituting the first step of 2 biosynthetic pathways, one leading to arginine and/or urea and the other to pyrimidine nucleotides. The large subunit (synthetase) binds the substrates ammonia (free or transferred from glutamine from the small subunit), hydrogencarbonate and ATP and carries out an ATP-coupled ligase reaction, activating hydrogencarbonate by forming carboxy phosphate which reacts with ammonia to form carbamoyl phosphate. This Streptococcus pyogenes serotype M5 (strain Manfredo) protein is Carbamoyl phosphate synthase large chain.